A 170-amino-acid chain; its full sequence is MTSSPIRILGIDPGLRRTGWGVLDIEGNRLMFVGCGSVETREQMALASRLLAIHEGLGRVLDEFRPAEAAIEQTFVNKDGVATLKLGQARGVAMLAPAMFGIVVAEYAPNQVKKTVVGAGHADKTQIQAMLKILLPKADPKSADAADALAIAITHAHHRGAAALRMKVAG.

Catalysis depends on residues Asp-12, Glu-72, and Asp-144. 3 residues coordinate Mg(2+): Asp-12, Glu-72, and Asp-144.

This sequence belongs to the RuvC family. As to quaternary structure, homodimer which binds Holliday junction (HJ) DNA. The HJ becomes 2-fold symmetrical on binding to RuvC with unstacked arms; it has a different conformation from HJ DNA in complex with RuvA. In the full resolvosome a probable DNA-RuvA(4)-RuvB(12)-RuvC(2) complex forms which resolves the HJ. Requires Mg(2+) as cofactor.

Its subcellular location is the cytoplasm. It carries out the reaction Endonucleolytic cleavage at a junction such as a reciprocal single-stranded crossover between two homologous DNA duplexes (Holliday junction).. Functionally, the RuvA-RuvB-RuvC complex processes Holliday junction (HJ) DNA during genetic recombination and DNA repair. Endonuclease that resolves HJ intermediates. Cleaves cruciform DNA by making single-stranded nicks across the HJ at symmetrical positions within the homologous arms, yielding a 5'-phosphate and a 3'-hydroxyl group; requires a central core of homology in the junction. The consensus cleavage sequence is 5'-(A/T)TT(C/G)-3'. Cleavage occurs on the 3'-side of the TT dinucleotide at the point of strand exchange. HJ branch migration catalyzed by RuvA-RuvB allows RuvC to scan DNA until it finds its consensus sequence, where it cleaves and resolves the cruciform DNA. The sequence is that of Crossover junction endodeoxyribonuclease RuvC from Nitrobacter hamburgensis (strain DSM 10229 / NCIMB 13809 / X14).